A 357-amino-acid chain; its full sequence is Dual-specificity RNA methyltransferase RlmN (357 aa).

Glu89 functions as the Proton acceptor in the catalytic mechanism. The region spanning 109–340 (EGEKYTVCVS…CTIRESKALD (232 aa)) is the Radical SAM core domain. Cys116 and Cys345 form a disulfide bridge. Residues Cys123, Cys127, and Cys130 each contribute to the [4Fe-4S] cluster site. Residues 173 to 174 (GE), Ser203, 226 to 228 (SLH), and Asn302 contribute to the S-adenosyl-L-methionine site. Cys345 (S-methylcysteine intermediate) is an active-site residue.

This sequence belongs to the radical SAM superfamily. RlmN family. [4Fe-4S] cluster serves as cofactor.

The protein resides in the cytoplasm. It catalyses the reaction adenosine(2503) in 23S rRNA + 2 reduced [2Fe-2S]-[ferredoxin] + 2 S-adenosyl-L-methionine = 2-methyladenosine(2503) in 23S rRNA + 5'-deoxyadenosine + L-methionine + 2 oxidized [2Fe-2S]-[ferredoxin] + S-adenosyl-L-homocysteine. It carries out the reaction adenosine(37) in tRNA + 2 reduced [2Fe-2S]-[ferredoxin] + 2 S-adenosyl-L-methionine = 2-methyladenosine(37) in tRNA + 5'-deoxyadenosine + L-methionine + 2 oxidized [2Fe-2S]-[ferredoxin] + S-adenosyl-L-homocysteine. Specifically methylates position 2 of adenine 2503 in 23S rRNA and position 2 of adenine 37 in tRNAs. m2A2503 modification seems to play a crucial role in the proofreading step occurring at the peptidyl transferase center and thus would serve to optimize ribosomal fidelity. This chain is Dual-specificity RNA methyltransferase RlmN, found in Helicobacter pylori (strain G27).